Reading from the N-terminus, the 76-residue chain is Theta defensin subunit A (76 aa).

Positions 1 to 22 (MRTFALLTAMLLLVALHAQAEA) are cleaved as a signal peptide. Residues 23–64 (RQARADEAAAQQQPGADDQGMAHSFTWPENAALPLSESAKGL) constitute a propeptide that is removed on maturation. A disordered region spans residues 25–45 (ARADEAAAQQQPGADDQGMAH). The span at 30-44 (AAAQQQPGADDQGMA) shows a compositional bias: low complexity. A Cyclopeptide (Arg-Cys) (interchain with C-73 in subunit A); in form BTD-3 cross-link involves residue arginine 65. Arginine 65 participates in a covalent cross-link: Cyclopeptide (Arg-Cys) (interchain with C-73 in subunit B); in form BTD-1. Arginine 65 participates in a covalent cross-link: Cyclopeptide (Arg-Cys) (interchain with C-73 in subunit C); in form BTD-4. Arginine 65 is covalently cross-linked (Cyclopeptide (Arg-Cys) (interchain with C-73 in subunit D); in form BTD-7). A disulfide bond links cysteine 68 and cysteine 73. A Cyclopeptide (Cys-Arg) (interchain with R-65 in subunit A); in form BTD-3 cross-link involves residue cysteine 73. Residue cysteine 73 forms a Cyclopeptide (Cys-Arg) (interchain with R-65 in subunit B); in form BTD-1 linkage. A Cyclopeptide (Cys-Arg) (interchain with R-65 in subunit C); in form BTD-4 cross-link involves residue cysteine 73. Cysteine 73 participates in a covalent cross-link: Cyclopeptide (Cys-Arg) (interchain with R-65 in subunit D); in form BTD-7. Positions 74-76 (RLL) are excised as a propeptide.

The protein belongs to the alpha-defensin family. Theta subfamily. As to quaternary structure, BTD-1 is a cyclic heterodimer composed of subunits A and B; disulfide-linked. BTD-3 is a cyclic homodimer composed of two subunits A; disulfide-linked. BTD-4 is a cyclic heterodimer composed of subunits A and C; disulfide-linked. BTD-7 is a cyclic heterodimer composed of subunits A and D; disulfide-linked. In terms of processing, forms a cyclic peptide with subunit B (BTD-1), subunit A (BTD-3), subunit C (BTD-4), or subunit D (BTD-7). An additional intersubunit disulfide bond is formed.

Its function is as follows. BTD-1, BTD-3, BTD-4 and BTD-7 have antimicrobial activity against the Gram-negative bacterium E.coli ML35, the Gram-positive bacterium S.aureus 502a, and the fungus C.albicans 16820. BTD-3 is more effective against E.coli than BTD-1, BTD-4 and BTD-7. In Papio anubis (Olive baboon), this protein is Theta defensin subunit A (BTDA).